Reading from the N-terminus, the 691-residue chain is DNA ligase (691 aa).

NAD(+) is bound by residues 41-45, 90-91, and Glu130; these read DAEYD and SL. The active-site N6-AMP-lysine intermediate is the Lys132. NAD(+) contacts are provided by Arg153, Glu190, Lys307, and Lys331. Residues Cys425, Cys428, Cys443, and Cys449 each coordinate Zn(2+). A BRCT domain is found at 610–691; it reads APQGVLAGKT…MHTLLEGHAR (82 aa).

It belongs to the NAD-dependent DNA ligase family. LigA subfamily. Mg(2+) is required as a cofactor. Requires Mn(2+) as cofactor.

It carries out the reaction NAD(+) + (deoxyribonucleotide)n-3'-hydroxyl + 5'-phospho-(deoxyribonucleotide)m = (deoxyribonucleotide)n+m + AMP + beta-nicotinamide D-nucleotide.. In terms of biological role, DNA ligase that catalyzes the formation of phosphodiester linkages between 5'-phosphoryl and 3'-hydroxyl groups in double-stranded DNA using NAD as a coenzyme and as the energy source for the reaction. It is essential for DNA replication and repair of damaged DNA. The sequence is that of DNA ligase from Burkholderia pseudomallei (strain 668).